Here is an 862-residue protein sequence, read N- to C-terminus: Fork head protein homolog 2 (862 aa).

The FHA domain maps to 83–152; the sequence is VSIGRNTDPL…NGAKVNFQRT (70 aa). A DNA-binding region (fork-head) is located at residues 339 to 430; that stretch reads VKPPHSYATM…QQEFLNKWNT (92 aa). 4 disordered regions span residues 498 to 528, 611 to 663, 698 to 730, and 750 to 846; these read PSKG…QEQR, SDSA…GTTT, PERG…LQTS, and ESNN…ANAK. Residues 504-520 show a composition bias toward low complexity; the sequence is PASQQSQPPVSHQNQSQ. Polar residues predominate over residues 611 to 644; the sequence is SDSADKSTNNNGGTKMNLPAISTSSLDENGNLEP. Residues 645–655 show a composition bias toward low complexity; it reads TTTTSSGNSNS. Serine 708 bears the Phosphoserine mark. The segment covering 712 to 726 has biased composition (low complexity); that stretch reads SNSNNTNNNGANNSN. Composition is skewed to polar residues over residues 750–770 and 778–788; these read ESNN…NVKS and LQFSSTNNTPA. Basic and acidic residues predominate over residues 804 to 829; the sequence is IKAKENENATSEKDSDSNSNDLETKD. Positions 830–844 are enriched in polar residues; sequence INSSPLKNQGGSTAN. Residues serine 832 and serine 833 each carry the phosphoserine modification.

In terms of assembly, interacts with MCM1. Interacts with NDD1. Interacts with the origin recognition complex (ORC) composed of ORC1 to ORC6.

The protein resides in the nucleus. It is found in the cytoplasm. Its subcellular location is the cytosol. Functionally, transcription factor that regulates the expression of the CLB2 cluster of genes during the G2/M phase of the mitotic cell cycle. The CLB2 cluster of genes includes mitotic regulators such as CLB1, CLB2, CDC5 and CDC20 as well as SWI5 and ACE2, transcription factors required for the subsequent temporal wave of cell cycle regulated gene expression in the M/G1 phase interval. Involved in HMRa silencing. FKH1 and FKH2 associate with the coding regions of active genes and influence, in opposing ways, transcriptional elongation and termination, and coordinate early transcription elongation and pre-mRNA processing. Both FKH1 and FKH2 play a role as regulators of lifespan in collaboration with the anaphase-promoting complex (APC), likely through combined regulation of stress response, genomic stability, and cell cycle regulation. FKH1 and FKH2 function also in controlling yeast cell morphology by preventing preudohyphal growth. Acts as a rate-limiting replication origin activator via its interaction with the origin recognition complex (ORC). This chain is Fork head protein homolog 2, found in Saccharomyces cerevisiae (strain ATCC 204508 / S288c) (Baker's yeast).